The sequence spans 334 residues: Holliday junction branch migration complex subunit RuvB (334 aa).

The tract at residues 1–182 is large ATPase domain (RuvB-L); that stretch reads MDERLVSSEA…FGVMSRLEYY (182 aa). Residues Leu21, Arg22, Gly63, Lys66, Thr67, Thr68, 129–131, Arg172, Tyr182, and Arg219 contribute to the ATP site; that span reads EDF. Thr67 provides a ligand contact to Mg(2+). Residues 183–253 form a small ATPAse domain (RuvB-S) region; that stretch reads TQEELADIVT…ISQNALERLQ (71 aa). Residues 256 to 334 are head domain (RuvB-H); sequence RLGLDHIDHK…HFQMEAPRYD (79 aa). Residues Arg311 and Arg316 each contribute to the DNA site.

Belongs to the RuvB family. In terms of assembly, homohexamer. Forms an RuvA(8)-RuvB(12)-Holliday junction (HJ) complex. HJ DNA is sandwiched between 2 RuvA tetramers; dsDNA enters through RuvA and exits via RuvB. An RuvB hexamer assembles on each DNA strand where it exits the tetramer. Each RuvB hexamer is contacted by two RuvA subunits (via domain III) on 2 adjacent RuvB subunits; this complex drives branch migration. In the full resolvosome a probable DNA-RuvA(4)-RuvB(12)-RuvC(2) complex forms which resolves the HJ. Homohexamer which interacts with RecU.

It is found in the cytoplasm. The enzyme catalyses ATP + H2O = ADP + phosphate + H(+). In terms of biological role, the RuvA-RuvB-RuvC complex processes Holliday junction (HJ) DNA during genetic recombination and DNA repair, while the RuvA-RuvB complex plays an important role in the rescue of blocked DNA replication forks via replication fork reversal (RFR). RuvA specifically binds to HJ cruciform DNA, conferring on it an open structure. The RuvB hexamer acts as an ATP-dependent pump, pulling dsDNA into and through the RuvAB complex. RuvB forms 2 homohexamers on either side of HJ DNA bound by 1 or 2 RuvA tetramers; 4 subunits per hexamer contact DNA at a time. Coordinated motions by a converter formed by DNA-disengaged RuvB subunits stimulates ATP hydrolysis and nucleotide exchange. Immobilization of the converter enables RuvB to convert the ATP-contained energy into a lever motion, pulling 2 nucleotides of DNA out of the RuvA tetramer per ATP hydrolyzed, thus driving DNA branch migration. The RuvB motors rotate together with the DNA substrate, which together with the progressing nucleotide cycle form the mechanistic basis for DNA recombination by continuous HJ branch migration. Branch migration allows RuvC to scan DNA until it finds its consensus sequence, where it cleaves and resolves cruciform DNA. This is Holliday junction branch migration complex subunit RuvB from Bacillus subtilis (strain 168).